The following is a 150-amino-acid chain: Nucleoside diphosphate kinase (150 aa).

ATP contacts are provided by Lys-10, Phe-58, Arg-86, Thr-92, Arg-103, and Asn-113. His-116 serves as the catalytic Pros-phosphohistidine intermediate.

Belongs to the NDK family. Mg(2+) serves as cofactor.

Its subcellular location is the cytoplasm. It catalyses the reaction a 2'-deoxyribonucleoside 5'-diphosphate + ATP = a 2'-deoxyribonucleoside 5'-triphosphate + ADP. The catalysed reaction is a ribonucleoside 5'-diphosphate + ATP = a ribonucleoside 5'-triphosphate + ADP. Its function is as follows. Major role in the synthesis of nucleoside triphosphates other than ATP. The ATP gamma phosphate is transferred to the NDP beta phosphate via a ping-pong mechanism, using a phosphorylated active-site intermediate. This is Nucleoside diphosphate kinase from Methanobrevibacter smithii (strain ATCC 35061 / DSM 861 / OCM 144 / PS).